A 292-amino-acid chain; its full sequence is Pantothenate synthetase (292 aa).

30 to 37 contacts ATP; sequence MGALHEGH. Histidine 37 acts as the Proton donor in catalysis. Glutamine 61 is a (R)-pantoate binding site. Glutamine 61 lines the beta-alanine pocket. 147-150 is a binding site for ATP; sequence GEKD. A (R)-pantoate-binding site is contributed by glutamine 153. 184 to 187 serves as a coordination point for ATP; the sequence is VSSR.

The protein belongs to the pantothenate synthetase family. In terms of assembly, homodimer.

It localises to the cytoplasm. It carries out the reaction (R)-pantoate + beta-alanine + ATP = (R)-pantothenate + AMP + diphosphate + H(+). It participates in cofactor biosynthesis; (R)-pantothenate biosynthesis; (R)-pantothenate from (R)-pantoate and beta-alanine: step 1/1. Its function is as follows. Catalyzes the condensation of pantoate with beta-alanine in an ATP-dependent reaction via a pantoyl-adenylate intermediate. In Chlorobium phaeovibrioides (strain DSM 265 / 1930) (Prosthecochloris vibrioformis (strain DSM 265)), this protein is Pantothenate synthetase.